The chain runs to 745 residues: 5-methyltetrahydropteroyltriglutamate--homocysteine methyltransferase (745 aa).

Residues 19–22 (RELK) and lysine 119 each bind 5-methyltetrahydropteroyltri-L-glutamate. L-homocysteine is bound by residues 418–420 (IGS) and glutamate 471. Residues 418-420 (IGS) and glutamate 471 contribute to the L-methionine site. 5-methyltetrahydropteroyltri-L-glutamate is bound by residues 502–503 (RC) and tryptophan 548. Aspartate 586 serves as a coordination point for L-homocysteine. Residue aspartate 586 coordinates L-methionine. Glutamate 592 is a 5-methyltetrahydropteroyltri-L-glutamate binding site. Zn(2+) is bound by residues histidine 628, cysteine 630, and glutamate 652. Histidine 681 functions as the Proton donor in the catalytic mechanism. Residue cysteine 713 coordinates Zn(2+).

This sequence belongs to the vitamin-B12 independent methionine synthase family. Requires Zn(2+) as cofactor.

It carries out the reaction 5-methyltetrahydropteroyltri-L-glutamate + L-homocysteine = tetrahydropteroyltri-L-glutamate + L-methionine. It functions in the pathway amino-acid biosynthesis; L-methionine biosynthesis via de novo pathway; L-methionine from L-homocysteine (MetE route): step 1/1. Catalyzes the transfer of a methyl group from 5-methyltetrahydrofolate to homocysteine resulting in methionine formation. The protein is 5-methyltetrahydropteroyltriglutamate--homocysteine methyltransferase of Corynebacterium glutamicum (strain ATCC 13032 / DSM 20300 / JCM 1318 / BCRC 11384 / CCUG 27702 / LMG 3730 / NBRC 12168 / NCIMB 10025 / NRRL B-2784 / 534).